The chain runs to 311 residues: MSNLKAIRDRIQSVKNTKKITEAMRLVASAKVRRAQEQVLATRPFADRLAGVLYGLQGRLQFEDVECPLLQQREVKKVGLVVLAGNRGLCGAYNSNIIKRAEARAAELKAEGLEYSYLLVGRKAIQHFTRRDAPISQCRDNPEKTPDPQEVSSATDEILAWFESGAVDRVELIYTKFVSLISSRPVTQTLLPLDLQGLEAQDDEVFRLTSKGGKFDVTREKVSVEPEALAQDMIFEQDPVEILNALLPLFLTNQLLRAWQESTASELAARMTAMSNASDNASDLVKTLTLSYNKARQASITQELLEVVAGA.

Cys-67 and Cys-138 form a disulfide bridge.

It belongs to the ATPase gamma chain family. As to quaternary structure, F-type ATPases have 2 components, CF(1) - the catalytic core - and CF(0) - the membrane proton channel. CF(1) has five subunits: alpha(3), beta(3), gamma(1), delta(1), epsilon(1). CF(0) has three main subunits: a, b and c.

It localises to the cellular thylakoid membrane. Thiol-modulation by raising the activation threshold of the enzyme upon oxidation of the cysteines, thereby preventing wasteful ATP-hydrolysis. Produces ATP from ADP in the presence of a proton gradient across the membrane. The gamma chain is believed to be important in regulating ATPase activity and the flow of protons through the CF(0) complex. The chain is ATP synthase gamma chain (atpG) from Arthrospira platensis (Spirulina platensis).